A 138-amino-acid polypeptide reads, in one-letter code: Large ribosomal subunit protein uL16 (138 aa).

Residues 1–15 (MLSPKKVKYRKKQRG) show a composition bias toward basic residues. Positions 1–21 (MLSPKKVKYRKKQRGRLSGEA) are disordered.

It belongs to the universal ribosomal protein uL16 family. Part of the 50S ribosomal subunit.

Binds 23S rRNA and is also seen to make contacts with the A and possibly P site tRNAs. The polypeptide is Large ribosomal subunit protein uL16 (Borreliella afzelii (strain PKo) (Borrelia afzelii)).